Consider the following 352-residue polypeptide: Gamma-aminobutyric acid-binding protein (352 aa).

Residues 1–28 (MFKSLHQYAHVFSRLSLFGLAFAAAAQA) form the signal peptide.

Belongs to the bacterial solute-binding protein 1 family.

Its subcellular location is the periplasm. Functionally, binds specifically gamma-aminobutyric acid (GABA) with nanomolar affinity. Does not bind structurally related compounds such as 4-aminovaleric acid, spermidine, histamine and butyric acid. The protein is Gamma-aminobutyric acid-binding protein of Pseudomonas aeruginosa (strain ATCC 15692 / DSM 22644 / CIP 104116 / JCM 14847 / LMG 12228 / 1C / PRS 101 / PAO1).